Consider the following 138-residue polypeptide: Glia maturation factor (138 aa).

The ADF-H domain maps to 3-138; that stretch reads DNQICDISNE…TEEWLKAKLK (136 aa).

Belongs to the actin-binding proteins ADF family. GMF subfamily. In ovaries, expressed in follicular epithelium, in polar cells, migrating border cells, and centripedal cells (at protein level).

It localises to the cell projection. The protein localises to the lamellipodium. The protein resides in the cytoplasm. Its subcellular location is the perinuclear region. It is found in the nucleus. It localises to the cell cortex. In terms of biological role, inhibits Arp2/3-mediated actin nucleation. Together with flr, promotes Arp2/3-nucleated actin filament array disassembly. Promotes debranching. Regulates lamellipodial protrusion dynamics possibly by facilitating lamellipodial retraction. In egg chambers, enhances the retraction dynamics of cellular extensions in border cells and thus together with flr plays an important role in directional migration of border cell clusters. In Drosophila melanogaster (Fruit fly), this protein is Glia maturation factor.